Consider the following 137-residue polypeptide: uncharacterized protein (137 aa).

The chain crosses the membrane as a helical span at residues 111–131; sequence LAVGVLVGSNLVVGSLVFALL.

It localises to the membrane. This is an uncharacterized protein from Saccharomyces cerevisiae (strain ATCC 204508 / S288c) (Baker's yeast).